The primary structure comprises 476 residues: Ribosomal RNA small subunit methyltransferase F (476 aa).

Residues 124 to 130, Glu-148, Asp-175, and Asp-193 contribute to the S-adenosyl-L-methionine site; that span reads ASAPGSK. The Nucleophile role is filled by Cys-246.

It belongs to the class I-like SAM-binding methyltransferase superfamily. RsmB/NOP family.

Its subcellular location is the cytoplasm. The enzyme catalyses cytidine(1407) in 16S rRNA + S-adenosyl-L-methionine = 5-methylcytidine(1407) in 16S rRNA + S-adenosyl-L-homocysteine + H(+). Its function is as follows. Specifically methylates the cytosine at position 1407 (m5C1407) of 16S rRNA. The sequence is that of Ribosomal RNA small subunit methyltransferase F from Photobacterium profundum (strain SS9).